A 430-amino-acid polypeptide reads, in one-letter code: UPF0597 protein BDI_1130 (430 aa).

This sequence belongs to the UPF0597 family.

The protein is UPF0597 protein BDI_1130 of Parabacteroides distasonis (strain ATCC 8503 / DSM 20701 / CIP 104284 / JCM 5825 / NCTC 11152).